Consider the following 457-residue polypeptide: Glycoprotein endo-alpha-1,2-mannosidase-like protein (457 aa).

At 1–8 (MARRRRRA) the chain is on the cytoplasmic side. The chain crosses the membrane as a helical; Signal-anchor for type II membrane protein span at residues 9–29 (CIALFLVLLFAFGTLMGLRTL). Residues 30–457 (KAPDGLPALG…FIKEKEQWLM (428 aa)) lie on the Lumenal side of the membrane. The interval 46-93 (PFERRPEGAPAPAARAPAAPAAPPPPPPPPRTADPGGSPGPAPAEAEP) is disordered. The span at 53–64 (GAPAPAARAPAA) shows a compositional bias: low complexity. Residues 65 to 87 (PAAPPPPPPPPRTADPGGSPGPA) show a composition bias toward pro residues.

The protein belongs to the glycosyl hydrolase 99 family.

Its subcellular location is the golgi apparatus membrane. This chain is Glycoprotein endo-alpha-1,2-mannosidase-like protein (MANEAL), found in Homo sapiens (Human).